We begin with the raw amino-acid sequence, 581 residues long: MGIRLQSSDSMNNQHQTQQNKYFNVSNQASTRSLWSQQQQQQLLDTKGSASTSKSPMLMANNNVFSIGPYRQRKDAGRVSVLEKYEIIGYIAAGTYGKVYKAKAKETQEEQENSIHTHNQTLGSVSVAGIDGGMASREVENGGDDPLRLDGHGGIAVAPAAGGGLSSAAAHRARSNGAVKALPKKSAFTPFYAIKKFKTEREGVEQLHYTGISQSACREMSLCRELDNKHLTKLVEIFLERKSIYMVSEFAEHDLLQIIHFHSHPEKRLIAPRMLKSIMWQILDGVSYLHQNWILHRDLKPANIMVTVDGCVKIGDLGLARKFYNLVQTLYTGDKVVVTIWYRAPELLLGARHYSPAIDLWAVGCIFAELIGLRPIFKGEEAKMDSKKSVPFQGNQLQRILEVLGTPTHHTWPNIHKYPEYEQLSKFSKYRDNLSVWYHSSGGRDKAALSLLYSLLKYDPITRIDAIDALEHEYFTNNDPPVSSDVFEGLSYKYPPRRIHTSDNDIMNVGANKNKSGFNHHPPQQQTVNNNGVTNSSIGGLGVNRRILAAAAAAAAAVQVNGTNIVSGSSSSNGPIRKKKR.

Residues 34–57 (LWSQQQQQQLLDTKGSASTSKSPM) are disordered. Positions 48 to 57 (GSASTSKSPM) are enriched in polar residues. One can recognise a Protein kinase domain in the interval 85–475 (YEIIGYIAAG…AIDALEHEYF (391 aa)). ATP is bound by residues 91 to 99 (IAAGTYGKV) and K195. D298 functions as the Proton acceptor in the catalytic mechanism.

The protein belongs to the protein kinase superfamily. CMGC Ser/Thr protein kinase family. CDC2/CDKX subfamily. Component of the SRB8-11 complex, a regulatory module of the Mediator complex. Mg(2+) is required as a cofactor.

Its subcellular location is the nucleus. It carries out the reaction L-seryl-[protein] + ATP = O-phospho-L-seryl-[protein] + ADP + H(+). It catalyses the reaction L-threonyl-[protein] + ATP = O-phospho-L-threonyl-[protein] + ADP + H(+). The enzyme catalyses [DNA-directed RNA polymerase] + ATP = phospho-[DNA-directed RNA polymerase] + ADP + H(+). Component of the SRB8-11 complex. The SRB8-11 complex is a regulatory module of the Mediator complex which is itself involved in regulation of basal and activated RNA polymerase II-dependent transcription. The SRB8-11 complex may be involved in the transcriptional repression of a subset of genes regulated by Mediator. It may inhibit the association of the Mediator complex with RNA polymerase II to form the holoenzyme complex. The SRB8-11 complex phosphorylates the C-terminal domain (CTD) of the largest subunit of RNA polymerase II. The chain is Serine/threonine-protein kinase SSN3 (SSN3) from Eremothecium gossypii (strain ATCC 10895 / CBS 109.51 / FGSC 9923 / NRRL Y-1056) (Yeast).